The following is a 299-amino-acid chain: Circadian clock oscillator protein KaiA (299 aa).

Residues 1 to 135 form a psR domain, binds oxidized quinones region; that stretch reads MQSPLSLCLF…LHLGPICTLP (135 aa). A KaiA N-terminal domain is found at 1-169; it reads MQSPLSLCLF…RLADKLKERL (169 aa). Residues 170 to 178 form a flexible linker region; it reads GYLGVYYKR. A KaiA C-terminal domain is found at 179-287; the sequence is KPSHFYRNFS…GEMYRRSIPR (109 aa).

Belongs to the KaiA family. Homodimer. The KaiABC1 complex composition changes during the circadian cycle to control KaiC1 phosphorylation. Complexes KaiC1(6), KaiA(2-4):KaiC1(6), KaiB(6):KaiC1(6) and KaiC1(6):KaiB(6):KaiA(12) are among the most important forms, many form cooperatively. KaiA and CikA bind to the same region of the KaiB(fs) form and therefore compete. Interacts with KaiC1 but not KaiC2 or KaiC3. Interacts with itself, not seen to interact with other Kai proteins.

Functionally, key component of the KaiABC oscillator complex, which constitutes the main circadian regulator in cyanobacteria. Complex composition changes during the circadian cycle to control KaiC phosphorylation. KaiA stimulates KaiC autophosphorylation, while KaiB sequesters KaiA, leading to KaiC autodephosphorylation. KaiA binding to the KaiC CII domain during the subjective day yields KaiA(2-4):KaiC(6) complexes which stimulate KaiC autophosphorylation. Phospho-Ser-431 KaiC accumulation triggers binding of KaiB during the subjective night to form the KaiB(6):KaiC(6) complex, leading to changes in the output regulators CikA and SasA. KaiB(6):KaiC(6) formation exposes a site for KaiA binding on KaiB that sequesters KaiA from KaiC's CII domain, making the KaiC(6):KaiB(6):KaiA(12) complex resulting in KaiC autodephosphorylation. Complete dephosphorylation of KaiC leads to dissociation of KaiA(2):KaiB(1), completing 1 cycle of the Kai oscillator. Its function is as follows. Component of the oscillator and circadian clock in this organism, enhances fitness in a rhythmic environment. Stimulates KaiC1 to autophosphorylate, has no effect on the kinase activity of KaiC2 or KaiC3. Binds oxidized quinones via the N-terminal PsR domain, allowing it to sense redox changes and possibly mediate clock input. This chain is Circadian clock oscillator protein KaiA, found in Synechocystis sp. (strain ATCC 27184 / PCC 6803 / Kazusa).